The primary structure comprises 199 residues: Putative pseudouridine methyltransferase (199 aa).

S-adenosyl-L-methionine is bound by residues methionine 132 and cysteine 186.

Belongs to the methyltransferase superfamily. TrmY family.

The protein localises to the cytoplasm. This chain is Putative pseudouridine methyltransferase, found in Vibrio atlanticus (strain LGP32) (Vibrio splendidus (strain Mel32)).